The primary structure comprises 215 residues: Formate dehydrogenase subunit beta (215 aa).

The region spanning 3–32 is the 4Fe-4S ferredoxin-type 1 domain; the sequence is KGFFVDTTRCTACRGCQVACKQWHGNPATP. [4Fe-4S] cluster contacts are provided by Cys12, Cys15, Cys18, Cys22, Cys73, Cys76, Cys81, Cys121, Cys138, Cys141, Cys153, and Cys157. One can recognise a 4Fe-4S ferredoxin-type 2 domain in the interval 129–168; it reads VAESNQMAKCDMCIDRITNGLRPACVTSCPTGAMNFGDLS.

As to quaternary structure, heterodimer of alpha (FdhA) and beta (FdhB) subunits. [4Fe-4S] cluster is required as a cofactor.

Its subcellular location is the periplasm. Beta chain of the formate dehydrogenase (FDH) catalyzes the reversible two-electron oxidation of formate to carbon dioxide. FDH loses activity in the presence of air, but this activity can be restored. This chain is an electron transfer unit. This is Formate dehydrogenase subunit beta from Megalodesulfovibrio gigas (strain ATCC 19364 / DSM 1382 / NCIMB 9332 / VKM B-1759) (Desulfovibrio gigas).